Here is a 200-residue protein sequence, read N- to C-terminus: MKEIYLIGLGNPGKKFLNSRHNIGFLLLEYFSKKYNSNFLFKDKLKSSYSEFQIDNSSYRLFLPNTFMNNSGYAVRAIVDWYKINLDQIFIIVDDKDLPLGKIRFRRKGSSGGHNGLKSIIEQLQTQKFKRIRIGIGSPPPIKGEKNFNTISHVLGNISLEEKSILDKVFRRVIESLEKLNTKKEEYIINELNSFDKDQH.

F16 lines the tRNA pocket. Catalysis depends on H21, which acts as the Proton acceptor. Residues F67, N69, and N115 each contribute to the tRNA site.

This sequence belongs to the PTH family. In terms of assembly, monomer.

Its subcellular location is the cytoplasm. The enzyme catalyses an N-acyl-L-alpha-aminoacyl-tRNA + H2O = an N-acyl-L-amino acid + a tRNA + H(+). Its function is as follows. Hydrolyzes ribosome-free peptidyl-tRNAs (with 1 or more amino acids incorporated), which drop off the ribosome during protein synthesis, or as a result of ribosome stalling. Functionally, catalyzes the release of premature peptidyl moieties from peptidyl-tRNA molecules trapped in stalled 50S ribosomal subunits, and thus maintains levels of free tRNAs and 50S ribosomes. The polypeptide is Peptidyl-tRNA hydrolase (Prochlorococcus marinus (strain MIT 9215)).